We begin with the raw amino-acid sequence, 919 residues long: PAX3- and PAX7-binding protein 1 (919 aa).

Residues 1–11 (MFRKARRVNVR) show a composition bias toward basic residues. Disordered regions lie at residues 1 to 120 (MFRK…ENEE), 151 to 206 (KTEL…GGAF), and 237 to 277 (AREL…RIVF). At serine 16 the chain carries Phosphoserine. Residues 16 to 28 (SEEEERERDEEQE) show a composition bias toward acidic residues. Residues 49–59 (RAPAGESLLGP) show a composition bias toward low complexity. Residues 75–87 (AEAGGGISGGAEP) are compositionally biased toward gly residues. Residue lysine 151 forms a Glycyl lysine isopeptide (Lys-Gly) (interchain with G-Cter in SUMO1); alternate linkage. Lysine 151 participates in a covalent cross-link: Glycyl lysine isopeptide (Lys-Gly) (interchain with G-Cter in SUMO2); alternate. Residue serine 160 is modified to Phosphoserine. The segment covering 163–174 (PLDKTCHAKDTN) has biased composition (basic and acidic residues). Acidic residues predominate over residues 185–195 (GEDEMDMESEK). Phosphoserine is present on serine 193. A compositionally biased stretch (basic and acidic residues) spans 237–258 (ARELGDFTPHDSEPGKGRLVRE). A compositionally biased stretch (acidic residues) spans 259-270 (DENDASDDEDDD). Phosphoserine is present on residues serine 264, serine 297, serine 559, and serine 560. The segment at 380 to 560 (TPSNEMAPVT…MADHLEGLSS (181 aa)) is necessary and sufficient for interaction with PAX7. Residues 533 to 566 (EREARRTRRRQAREQTGQMADHLEGLSSDDEETS) are disordered. Threonine 565 is modified (phosphothreonine).

The protein belongs to the GCF family. As to quaternary structure, interacts with PAX3 and PAX7. Interacts with WDR5; associates with a histone methyltransferase (HMT) complex composed at least of RBBP5, ASH2L, SET1, SET2 and KMT2A/MLL1, KMT2D/MLL2, KMT2C/MLL3 and KMT2B/MLL4 through direct interaction with WDR5. In terms of tissue distribution, ubiquitously expressed in all tissues tested including skeletal muscle. Expressed in primary myoblasts.

It is found in the nucleus. Functionally, adapter protein linking the transcription factors PAX3 and PAX7 to the histone methylation machinery and involved in myogenesis. Associates with a histone methyltransferase complex that specifically mediates dimethylation and trimethylation of 'Lys-4' of histone H3. Mediates the recruitment of that complex to the transcription factors PAX3 and PAX7 on chromatin to regulate the expression of genes involved in muscle progenitor cells proliferation including ID3 and CDC20. This chain is PAX3- and PAX7-binding protein 1 (Paxbp1), found in Mus musculus (Mouse).